A 208-amino-acid polypeptide reads, in one-letter code: ATP synthase subunit b (208 aa).

The span at 1 to 18 shows a compositional bias: polar residues; the sequence is MFVSTAFAQTATESQPAS. The tract at residues 1–26 is disordered; that stretch reads MFVSTAFAQTATESQPASTAGEHGAA. Residues 56–78 traverse the membrane as a helical segment; the sequence is SQVLWLAITFGLFYLFLSRVVLP.

It belongs to the ATPase B chain family. F-type ATPases have 2 components, F(1) - the catalytic core - and F(0) - the membrane proton channel. F(1) has five subunits: alpha(3), beta(3), gamma(1), delta(1), epsilon(1). F(0) has three main subunits: a(1), b(2) and c(10-14). The alpha and beta chains form an alternating ring which encloses part of the gamma chain. F(1) is attached to F(0) by a central stalk formed by the gamma and epsilon chains, while a peripheral stalk is formed by the delta and b chains.

Its subcellular location is the cell inner membrane. In terms of biological role, f(1)F(0) ATP synthase produces ATP from ADP in the presence of a proton or sodium gradient. F-type ATPases consist of two structural domains, F(1) containing the extramembraneous catalytic core and F(0) containing the membrane proton channel, linked together by a central stalk and a peripheral stalk. During catalysis, ATP synthesis in the catalytic domain of F(1) is coupled via a rotary mechanism of the central stalk subunits to proton translocation. Its function is as follows. Component of the F(0) channel, it forms part of the peripheral stalk, linking F(1) to F(0). This is ATP synthase subunit b from Brucella melitensis biotype 1 (strain ATCC 23456 / CCUG 17765 / NCTC 10094 / 16M).